We begin with the raw amino-acid sequence, 67 residues long: Theromin (67 aa).

Residues 2–27 (CENTECPRACPGEYEFDEDGCNTCVC) enclose the Antistasin-like domain.

In terms of assembly, homodimer. Eight disulfide bonds are present.

Its subcellular location is the secreted. In terms of biological role, potent thrombin-specific inhibitor. This chain is Theromin, found in Theromyzon tessulatum (Duck leech).